A 109-amino-acid polypeptide reads, in one-letter code: uncharacterized protein (109 aa).

The interval 36–109 (NSSNNLNNNN…KKKKKKRRVK (74 aa)) is disordered. Over residues 39 to 88 (NNLNNNNFNENNLKNNNNRNGNNNNNNNNNNNNNNNNNNNNNNNNNNNNN) the composition is skewed to low complexity. Basic residues predominate over residues 99–109 (QKKKKKKRRVK).

This is an uncharacterized protein from Dictyostelium discoideum (Social amoeba).